A 158-amino-acid polypeptide reads, in one-letter code: Putative cTAGE family member 3 (158 aa).

Residues 26–96 (QLQESQKQLL…AAVLEEDITD (71 aa)) are a coiled coil.

It belongs to the cTAGE family. In terms of tissue distribution, expressed in normal tissues including colon, mammary gland, ovary, placenta, stomach and testis, as well as several fetal tissues.

In terms of biological role, tumor-associated antigen. The polypeptide is Putative cTAGE family member 3 (CTAGE3P) (Homo sapiens (Human)).